The sequence spans 515 residues: MACKISPGANSASLPGHPNKVICERVRLQSLFPLLPSDQNTTVQEDAHFKAFFQSEDSPSPKRQRLSHSVFDYTSASPAPSPPMRPWEMTSNRQPPSVRPSQHHFSGERCNTPARNRRSPPVRRQRGRRDRLSRHNSISQDENYHHLPYAQQQAIEEPRAFHPPNVSPRLLHPAAHPPQQNAVMVDIHDQLHQGTVPVSYTVTTVAPHGIPLCTGQHIPACSTQQVPGCSVVFSGQHLPVCSVPPPMLQACSVQHLPVPYAAFPPLISSDPFLIHPPHLSPHHPPHLPPPGQFVPFQTQQSRSPLQRIENEVELLGEHLPVGGFTYPPSAHPPTLPPSAPLQFLTHDPLHQEVSFGVPYPPFMPRRLTGRSRYRSQQPIPPPPYHPSLLPYVLSMLPVPPAVGPTFSFELDVEDGEVENYEALLNLAERLGEAKPRGLTKADIEQLPSYRFNPNNHQSEQTLCVVCMCDFESRQLLRVLPCNHEFHAKCVDKWLKANRTCPICRADASEVHRDSE.

Residues 57–71 carry the Bipartite nuclear localization signal 1 motif; it reads DSPSPKRQRLSHSVF. The interval 73 to 141 is disordered; sequence YTSASPAPSP…LSRHNSISQD (69 aa). Residues 89 to 104 show a composition bias toward polar residues; the sequence is MTSNRQPPSVRPSQHH. The Bipartite nuclear localization signal 2 signature appears at 115–131; that stretch reads RNRRSPPVRRQRGRRDR. Residues 115 to 134 are compositionally biased toward basic residues; that stretch reads RNRRSPPVRRQRGRRDRLSR. An RING-type zinc finger spans residues 463 to 504; sequence CVVCMCDFESRQLLRVLPCNHEFHAKCVDKWLKANRTCPICR.

As to expression, widely expressed with highest levels in testis.

The protein resides in the nucleus. The enzyme catalyses S-ubiquitinyl-[E2 ubiquitin-conjugating enzyme]-L-cysteine + [acceptor protein]-L-lysine = [E2 ubiquitin-conjugating enzyme]-L-cysteine + N(6)-ubiquitinyl-[acceptor protein]-L-lysine.. It participates in protein modification; protein ubiquitination. In terms of biological role, acts as an E3 ubiquitin-protein ligase able to ubiquitinate p53/TP53 which promotes its relocalization to discrete foci associated with PML nuclear bodies. Exhibits preference for UBE2D2 as a E2 enzyme. The polypeptide is E3 ubiquitin-protein ligase RNF38 (Homo sapiens (Human)).